A 116-amino-acid chain; its full sequence is Ribonuclease P protein component (116 aa).

It belongs to the RnpA family. Consists of a catalytic RNA component (M1 or rnpB) and a protein subunit.

It catalyses the reaction Endonucleolytic cleavage of RNA, removing 5'-extranucleotides from tRNA precursor.. In terms of biological role, RNaseP catalyzes the removal of the 5'-leader sequence from pre-tRNA to produce the mature 5'-terminus. It can also cleave other RNA substrates such as 4.5S RNA. The protein component plays an auxiliary but essential role in vivo by binding to the 5'-leader sequence and broadening the substrate specificity of the ribozyme. This chain is Ribonuclease P protein component, found in Pseudanabaena sp. (strain PCC 6903).